The sequence spans 558 residues: Glucose-6-phosphate isomerase (558 aa).

At alanine 2 the chain carries N-acetylalanine. N6-acetyllysine is present on lysine 12. Lysine 34 is subject to N6-(2-hydroxyisobutyryl)lysine. Serine 107 is subject to Phosphoserine. At threonine 109 the chain carries Phosphothreonine. Lysine 142 bears the N6-acetyllysine mark. D-glucose 6-phosphate is bound at residue 159 to 160 (GS). A Phosphoserine; by CK2 modification is found at serine 185. D-glucose 6-phosphate is bound at residue 210–215 (SKTFTT). The residue at position 250 (threonine 250) is a Phosphothreonine. Positions 354, 358, and 389 each coordinate D-glucose 6-phosphate. Catalysis depends on glutamate 358, which acts as the Proton donor. Histidine 389 is an active-site residue. Lysine 454 bears the N6-acetyllysine; alternate mark. N6-malonyllysine; alternate is present on lysine 454. An N6-succinyllysine; alternate modification is found at lysine 454. Serine 455 carries the phosphoserine modification. Lysine 519 provides a ligand contact to D-glucose 6-phosphate. The active site involves lysine 519.

The protein belongs to the GPI family. As to quaternary structure, homodimer; in the catalytically active form. Monomer in the secreted form. Phosphorylation at Ser-185 by CK2 has been shown to decrease enzymatic activity and may contribute to secretion by a non-classical secretory pathway. In terms of processing, ISGylated.

It localises to the cytoplasm. The protein localises to the secreted. The enzyme catalyses alpha-D-glucose 6-phosphate = beta-D-fructose 6-phosphate. The protein operates within carbohydrate degradation; glycolysis; D-glyceraldehyde 3-phosphate and glycerone phosphate from D-glucose: step 2/4. Its function is as follows. In the cytoplasm, catalyzes the conversion of glucose-6-phosphate to fructose-6-phosphate, the second step in glycolysis, and the reverse reaction during gluconeogenesis. Besides it's role as a glycolytic enzyme, also acts as a secreted cytokine: acts as an angiogenic factor (AMF) that stimulates endothelial cell motility. Acts as a neurotrophic factor, neuroleukin, for spinal and sensory neurons. It is secreted by lectin-stimulated T-cells and induces immunoglobulin secretion. The protein is Glucose-6-phosphate isomerase of Pongo abelii (Sumatran orangutan).